Here is an 841-residue protein sequence, read N- to C-terminus: SLIT and NTRK-like protein 6 (841 aa).

Residues 1 to 26 (MKLWIHLFYSSLLACISLHSQTPVLS) form the signal peptide. Residues 27 to 67 (SRGSCDSLCNCEEKDGTMLINCEAKGIKMVSEISVPPSRPF) enclose the LRRNT 1 domain. At 27 to 608 (SRGSCDSLCN…RSLTDAVPLS (582 aa)) the chain is on the extracellular side. LRR repeat units lie at residues 89 to 110 (NAISIHLGFNNIADIEIGAFNG), 113 to 134 (LLKQLHINHNSLEILKEDTFHG), 137 to 158 (NLEFLQADNNFITVIEPSAFSK), 161 to 182 (RLKVLILNDNAIESLPPNIFRF), and 184 to 205 (PLTHLDLRGNQLQTLPYVGFLE). The region spanning 218-269 (NKWACNCDLLQLKTWLENMPPQSIIGDVVCNSPPFFKGSILSRLKKESICPT) is the LRRCT 1 domain. Positions 320–361 (PSTQLPGPYCPIPCNCKVLSPSGLLIHCQERNIESLSDLRPP) constitute an LRRNT 2 domain. LRR repeat units follow at residues 364 to 385 (NPRKLILAGNIIHSLMKSDLVE), 388 to 409 (TLEMLHLGNNRIEVLEEGSFMN), 412 to 433 (RLQKLYLNGNHLTKLSKGMFLG), 436 to 457 (NLEYLYLEYNAIKEILPGTFNP), 460 to 481 (KLKVLYLNNNLLQVLPPHIFSG), and 483 to 504 (PLTKVNLKTNQFTHLPVSNILD). Positions 517–568 (NPWDCSCDLVGLQQWIQKLSKNTVTDDILCTSPGHLDKKELKALNSEILCPG) constitute an LRRCT 2 domain. Residues 609–629 (VLILGLLIMFITIVFCAAGIV) form a helical membrane-spanning segment. Residues 630 to 841 (VLVLHRRRRY…DYLEVLEQQT (212 aa)) lie on the Cytoplasmic side of the membrane.

Belongs to the SLITRK family. In terms of tissue distribution, in adult brain, highly expressed in putamen with no expression in cerebral cortex. Expressed in adult and fetal lung and fetal liver. Also expressed at high levels in some brain tumors including medulloblastomas and primitive neuroectodermal tumors.

The protein resides in the cell membrane. Its function is as follows. Regulator of neurite outgrowth required for normal hearing and vision. The chain is SLIT and NTRK-like protein 6 (SLITRK6) from Homo sapiens (Human).